Here is a 378-residue protein sequence, read N- to C-terminus: Atypical chemokine receptor 2 (378 aa).

Topologically, residues 1–49 (MPTVASPLPLTTVGSENSSSIYDYDYLDDMTILVCRKDEVLSFGRVFLP) are extracellular. N-linked (GlcNAc...) asparagine glycosylation is present at Asn-17. A helical transmembrane segment spans residues 50–70 (VVYSLIFVLGLAGNLLLLVVL). The Cytoplasmic portion of the chain corresponds to 71-91 (LHSAPRRRTMELYLLNLAVSN). A helical transmembrane segment spans residues 92–112 (LLFVVTMPFWAISVAWHWVFG). Topologically, residues 113–117 (SFLCK) are extracellular. Cys-116 and Cys-194 are joined by a disulfide. A helical membrane pass occupies residues 118 to 139 (VISTLYSINFYCGIFFITCMSL). The Cytoplasmic segment spans residues 140–161 (DKYLEIVHAQPLHRPKAQFRNL). The helical transmembrane segment at 162–182 (LLIVMVWITSLAISVPEMVFV) threads the bilayer. Residues 183–216 (QIHQTLDGVWHCYADFGGHATIWKLYLRFQLNLL) are Extracellular-facing. The helical transmembrane segment at 217-237 (GFLLPLLAMIFFYSRIGCVLV) threads the bilayer. Topologically, residues 238-249 (RLRPPGQGRALR) are cytoplasmic. Residues 250–270 (MAAALVIVFFMLWFPYNLTLF) traverse the membrane as a helical segment. The Extracellular portion of the chain corresponds to 271–292 (LHSLLDLHVFGNCEISHRLDYT). The chain crosses the membrane as a helical span at residues 293–313 (LQVTESLAFSHCCFTPVLYAF). Over 314 to 378 (CSHRFRRYLK…SLNKGEMGNT (65 aa)) the chain is Cytoplasmic. The tract at residues 326-378 (LSVMLRWHQAPGTPSSNHSESSRVTAQEDVVSMNDLGERQSEDSLNKGEMGNT) is C-terminal cytoplasmic tail.

The protein belongs to the G-protein coupled receptor 1 family. Atypical chemokine receptor subfamily. In terms of processing, phosphorylated on serine residues in the C-terminal cytoplasmic tail. As to expression, expressed on apoptotic neutrophils (at protein level).

Its subcellular location is the early endosome. It localises to the recycling endosome. It is found in the cell membrane. Its function is as follows. Atypical chemokine receptor that controls chemokine levels and localization via high-affinity chemokine binding that is uncoupled from classic ligand-driven signal transduction cascades, resulting instead in chemokine sequestration, degradation, or transcytosis. Also known as interceptor (internalizing receptor) or chemokine-scavenging receptor or chemokine decoy receptor. Acts as a receptor for chemokines including CCL2, CCL3, CCL3L1, CCL4, CCL5, CCL7, CCL8, CCL11, CCL13, CCL17, CCL22, CCL23, CCL24, SCYA2/MCP-1, SCY3/MIP-1-alpha, SCYA5/RANTES and SCYA7/MCP-3. Upon active ligand stimulation, activates a beta-arrestin 1 (ARRB1)-dependent, G protein-independent signaling pathway that results in the phosphorylation of the actin-binding protein cofilin (CFL1) through a RAC1-PAK1-LIMK1 signaling pathway. Activation of this pathway results in up-regulation of ACKR2 from endosomal compartment to cell membrane, increasing its efficiency in chemokine uptake and degradation. By scavenging chemokines in tissues, on the surfaces of lymphatic vessels, and in placenta, plays an essential role in the resolution (termination) of the inflammatory response and in the regulation of adaptive immune responses. Plays a major role in the immune silencing of macrophages during the resolution of inflammation. Acts as a regulator of inflammatory leukocyte interactions with lymphatic endothelial cells (LECs) and is required for immature/mature dendritic cells discrimination by LECs. The sequence is that of Atypical chemokine receptor 2 (Ackr2) from Mus musculus (Mouse).